The primary structure comprises 732 residues: Aldehyde oxidoreductase molybdenum-binding subunit PaoC (732 aa).

Mo-molybdopterin cytosine dinucleotide is bound by residues 241-242, 468-470, 511-512, 615-621, Gln-625, and 688-691; these read GF, IGT, GA, RILNPKT, and KGVG. The active-site Proton acceptor is Glu-692.

The protein belongs to the xanthine dehydrogenase family. As to quaternary structure, heterotrimer composed of PaoA, PaoB and PaoC. Mo-molybdopterin cytosine dinucleotide is required as a cofactor.

The protein resides in the periplasm. The catalysed reaction is an aldehyde + A + H2O = a carboxylate + AH2 + H(+). The complex requires PaoD for activity. Its function is as follows. Oxidizes aldehydes to the corresponding carboxylic acids with a preference for aromatic aldehydes. It might play a role in the detoxification of aldehydes to avoid cell damage. This Escherichia coli (strain K12) protein is Aldehyde oxidoreductase molybdenum-binding subunit PaoC.